The following is a 918-amino-acid chain: Isoleucine--tRNA ligase (918 aa).

A 'HIGH' region motif is present at residues 57 to 67 (PYANGHIHIGT). Residue Glu552 participates in L-isoleucyl-5'-AMP binding. The 'KMSKS' region signature appears at 593–597 (KMSKS). Residue Lys596 coordinates ATP. Zn(2+) is bound by residues Cys886, Cys889, Cys906, and Cys909.

This sequence belongs to the class-I aminoacyl-tRNA synthetase family. IleS type 1 subfamily. As to quaternary structure, monomer. Zn(2+) serves as cofactor.

It localises to the cytoplasm. It catalyses the reaction tRNA(Ile) + L-isoleucine + ATP = L-isoleucyl-tRNA(Ile) + AMP + diphosphate. In terms of biological role, catalyzes the attachment of isoleucine to tRNA(Ile). As IleRS can inadvertently accommodate and process structurally similar amino acids such as valine, to avoid such errors it has two additional distinct tRNA(Ile)-dependent editing activities. One activity is designated as 'pretransfer' editing and involves the hydrolysis of activated Val-AMP. The other activity is designated 'posttransfer' editing and involves deacylation of mischarged Val-tRNA(Ile). This Thermotoga neapolitana (strain ATCC 49049 / DSM 4359 / NBRC 107923 / NS-E) protein is Isoleucine--tRNA ligase.